The following is a 463-amino-acid chain: Putative ankyrin repeat protein R579 (463 aa).

8 ANK repeats span residues 124–154, 156–181, 242–271, 273–299, 300–328, 329–355, 356–385, and 387–416; these read LKTD…KCTI, SITR…SENI, KEKN…QFNP, IYLW…DYRP, HIDR…VSQE, NINE…MGAD, INYK…DITT, and GSND…TITL.

In Acanthamoeba polyphaga (Amoeba), this protein is Putative ankyrin repeat protein R579.